The primary structure comprises 414 residues: Proton/glutamate-aspartate symporter (414 aa).

Residues 1–3 (MKK) lie on the Cytoplasmic side of the membrane. A helical transmembrane segment spans residues 4-24 (LIAFQILIALAVGAVIGHFFP). Residues 25-42 (DFGMALRPVGDGFIRLIK) lie on the Extracellular side of the membrane. A helical membrane pass occupies residues 43 to 63 (MIVVPIVFSTIVIGAAGSGSM). The Cytoplasmic segment spans residues 64-73 (KKMGSLGIKT). Residues 74–94 (IIWFEVITTLVLGLGLLLANV) form a helical membrane-spanning segment. The Extracellular segment spans residues 95 to 144 (LKPGVGLDLSHLAKKDIHELSGYTDKVVDFKQMILDIIPTNIIDVMARND). The chain crosses the membrane as a helical span at residues 145 to 165 (LLAVIFFAILFGVAAAGIGKA). Over 166-182 (SEPVMKFFESTAQIMFK) the chain is Cytoplasmic. A helical transmembrane segment spans residues 183-203 (LTQIVMVTAPIGVLALMAASV). Over 204 to 219 (GQYGIELLLPMFKLVG) the chain is Extracellular. A helical transmembrane segment spans residues 220–240 (TVFLGLFLILFVLFPLVGLIF). Residue Q241 is a topological domain, cytoplasmic. Residues 242 to 262 (IKYFEVLKMIWDLFLIAFSTT) form a helical membrane-spanning segment. Over 263–300 (STETILPQLMDRMEKYGCPKRVVSFVVPSGLSLNCDGS) the chain is Extracellular. Residues 301–321 (SLYLSVSCIFLAQAFQVDMTL) form a helical membrane-spanning segment. The Cytoplasmic portion of the chain corresponds to 322–324 (SQQ). The next 2 membrane-spanning stretches (helical) occupy residues 325 to 345 (LLMM…PSGS) and 346 to 366 (LVVL…VAII). Residues 367-414 (AGVDRVMDMARTGVNVPGHAIACIVVSKWEKAFRQKEWVSANSQTESI) are Cytoplasmic-facing.

This sequence belongs to the dicarboxylate/amino acid:cation symporter (DAACS) (TC 2.A.23) family.

Its subcellular location is the cell membrane. Its activity is regulated as follows. Glutamate uptake is inhibited by beta-hydroxyaspartate and cysteic acid. Catalyzes the proton-dependent, binding-protein-independent transport of glutamate and aspartate. This is Proton/glutamate-aspartate symporter from Bacillus subtilis (strain 168).